A 608-amino-acid chain; its full sequence is Leucine aminopeptidase 2 (608 aa).

Substrate-binding positions include 134–136 and 269–274; these read QCQ and PYGGME. Residue His-298 participates in Zn(2+) binding. Glu-299 serves as the catalytic Proton acceptor. Residues His-302 and Glu-321 each coordinate Zn(2+). Tyr-386 functions as the Proton donor in the catalytic mechanism.

This sequence belongs to the peptidase M1 family. The cofactor is Zn(2+).

It is found in the cytoplasm. It localises to the nucleus. The catalysed reaction is an epoxide + H2O = an ethanediol. Its function is as follows. Aminopeptidase that preferentially cleaves di- and tripeptides. Also has low epoxide hydrolase activity (in vitro). Can hydrolyze the epoxide leukotriene LTA(4) but it forms preferentially 5,6-dihydroxy-7,9,11,14-eicosatetraenoic acid rather than the cytokine leukotriene B(4) as the product compared to the homologous mammalian enzyme (in vitro). In Sclerotinia sclerotiorum (strain ATCC 18683 / 1980 / Ss-1) (White mold), this protein is Leucine aminopeptidase 2.